The following is a 148-amino-acid chain: Mediator of RNA polymerase II transcription subunit 31 (148 aa).

This sequence belongs to the Mediator complex subunit 31 family. In terms of assembly, component of the Mediator complex.

The protein localises to the nucleus. In terms of biological role, component of the Mediator complex, a coactivator involved in the regulated transcription of nearly all RNA polymerase II-dependent genes. Mediator functions as a bridge to convey information from gene-specific regulatory proteins to the basal RNA polymerase II transcription machinery. Mediator is recruited to promoters by direct interactions with regulatory proteins and serves as a scaffold for the assembly of a functional preinitiation complex with RNA polymerase II and the general transcription factors. The chain is Mediator of RNA polymerase II transcription subunit 31 from Taenia solium (Pork tapeworm).